Here is a 2971-residue protein sequence, read N- to C-terminus: uncharacterized protein (2971 aa).

The segment at 929 to 964 (SANFSNGPEESSLSTRLHIQKKRKAKKQRLETRRQK) is disordered. Positions 936 to 945 (PEESSLSTRL) are enriched in polar residues. Basic residues predominate over residues 946–955 (HIQKKRKAKK).

Its subcellular location is the plastid. It is found in the chloroplast. This is an uncharacterized protein from Chlamydomonas reinhardtii (Chlamydomonas smithii).